A 111-amino-acid chain; its full sequence is Anti-adapter protein IraM (111 aa).

This sequence belongs to the IraM/RssC family.

The protein resides in the cytoplasm. Its function is as follows. Involved in the stabilization of the sigma stress factor RpoS. The protein is Anti-adapter protein IraM of Cronobacter sakazakii (strain ATCC BAA-894) (Enterobacter sakazakii).